Here is a 264-residue protein sequence, read N- to C-terminus: Transmembrane protein 41A (264 aa).

A signal peptide spans 1–17 (MRPLLGLLLVFAGCTFA). 5 helical membrane-spanning segments follow: residues 67 to 87 (AYVFLLFCGAYLYKQGFAIPG), 100 to 122 (GPWLGLLLCCVLTSVGATCCYLL), 153 to 173 (LFFFLLFLRLFPMTPNWFLNL), 175 to 195 (APILNIPIVQFFFSVLIGLIP), and 219 to 239 (WDTVFKLLAIAMVALIPGTLI). Residues 96-207 (GALFGPWLGL…FICVQTGSIL (112 aa)) form a VTT domain region. N-linked (GlcNAc...) asparagine glycosylation is present at asparagine 250.

The protein belongs to the TMEM41 family.

Its subcellular location is the membrane. This Homo sapiens (Human) protein is Transmembrane protein 41A (TMEM41A).